A 373-amino-acid chain; its full sequence is MEFKIDGTSQGARACTIKTAHSTILTPVFMPVGTQGTVKALDANDMLELGAKIILGNTYHLYLRPGSKLIKKFGGLHGFSKFPNSFLTDSGGFQAFSLSNNSKPDENGITFKSHIDGSRHYFTPKSVLDTQYDLNSDIMMILDDLVALPNTDERIKTSIQRTTKWAQEAINYHMEQKQKGIGTHQNIFAIIQGGTSKEFRKLSAQQLCDMSDFDGFAIGGLSVGEPNEQMYETVEWTTQFMPKDKPRYLMGVGTPEDLIENIERGVDMFDCVMPTRNARNGTLFTSFGKLNIKKAEFKDDANPIDNECSCYTCKNFSRAYLNHLFRAAEITYFRLASIHNIHYYLNLMKQAREAILADNWSEFKKEFYVKRSK.

Asp89 (proton acceptor) is an active-site residue. Substrate-binding positions include 89 to 93 (DSGGF), Asp143, Gln192, and Gly220. The tract at residues 251–257 (GVGTPED) is RNA binding. Residue Asp270 is the Nucleophile of the active site. Residues 275-279 (TRNAR) form an RNA binding; important for wobble base 34 recognition region. Zn(2+)-binding residues include Cys308, Cys310, Cys313, and His339.

Belongs to the queuine tRNA-ribosyltransferase family. In terms of assembly, homodimer. Within each dimer, one monomer is responsible for RNA recognition and catalysis, while the other monomer binds to the replacement base PreQ1. It depends on Zn(2+) as a cofactor.

It catalyses the reaction 7-aminomethyl-7-carbaguanine + guanosine(34) in tRNA = 7-aminomethyl-7-carbaguanosine(34) in tRNA + guanine. It functions in the pathway tRNA modification; tRNA-queuosine biosynthesis. Functionally, catalyzes the base-exchange of a guanine (G) residue with the queuine precursor 7-aminomethyl-7-deazaguanine (PreQ1) at position 34 (anticodon wobble position) in tRNAs with GU(N) anticodons (tRNA-Asp, -Asn, -His and -Tyr). Catalysis occurs through a double-displacement mechanism. The nucleophile active site attacks the C1' of nucleotide 34 to detach the guanine base from the RNA, forming a covalent enzyme-RNA intermediate. The proton acceptor active site deprotonates the incoming PreQ1, allowing a nucleophilic attack on the C1' of the ribose to form the product. After dissociation, two additional enzymatic reactions on the tRNA convert PreQ1 to queuine (Q), resulting in the hypermodified nucleoside queuosine (7-(((4,5-cis-dihydroxy-2-cyclopenten-1-yl)amino)methyl)-7-deazaguanosine). In Aliarcobacter butzleri (strain RM4018) (Arcobacter butzleri), this protein is Queuine tRNA-ribosyltransferase.